A 603-amino-acid chain; its full sequence is Insulin-like growth factor-binding protein complex acid labile subunit (603 aa).

A signal peptide spans 1-23 (MALRTGSPALVVLLAFWVALGPC). An LRRNT domain is found at 32 to 74 (ASADAEGPQCPVTCTCSYDDYTDELSVFCSSRNLTQLPDGIPV). Intrachain disulfides connect Cys41–Cys47 and Cys45–Cys60. Residues Asn64, Asn85, and Asn96 are each glycosylated (N-linked (GlcNAc...) asparagine). LRR repeat units follow at residues 75–96 (STRA…AFQN), 99–120 (SLDF…ALLG), 123–144 (NLYH…LFRH), 147–168 (SLAS…LFRG), 171–192 (HLWD…VFQG), 195–216 (NLHE…LLCG), 219–240 (ELRE…VFIH), 243–264 (RLQK…AFLG), 267–288 (ALRW…TFPG), 291–312 (GLHV…TFKD), 315–336 (FLEE…TFEG), 339–360 (QLEV…AFFG), 363–384 (NVAV…VFQG), 387–408 (RLHS…TFAG), 411–432 (GLRR…SLAG), 435–456 (ELLE…LFQG), 459–480 (QLEY…VLGP), 483–504 (RAFW…LFSS), and 507–528 (RLRY…PGLE). The N-linked (GlcNAc...) asparagine glycan is linked to Asn368. Asn515 is a glycosylation site (N-linked (GlcNAc...) asparagine). An LRRCT domain is found at 535–603 (NPWDCSCPLK…DISETLFVHC (69 aa)). Cystine bridges form between Cys539–Cys581, Cys541–Cys603, and Cys565–Cys570. 2 N-linked (GlcNAc...) asparagine glycosylation sites follow: Asn578 and Asn586.

In terms of assembly, forms a ternary complex with IGF1 and IGFBP3.

It localises to the secreted. The protein localises to the extracellular space. Its function is as follows. May have an important role in regulating the access of circulating IGFs to the tissues. This Mus musculus (Mouse) protein is Insulin-like growth factor-binding protein complex acid labile subunit (Igfals).